Consider the following 588-residue polypeptide: Probable fumarate reductase Ifc3 (588 aa).

The first 22 residues, 1-22 (MKLKYLVSAMALVVLSSGTAMA), serve as a signal peptide directing secretion. The heme c site is built by His-31, Cys-37, Cys-40, His-41, Cys-58, Cys-61, His-62, His-78, His-81, Cys-87, Cys-90, His-91, Gly-93, His-94, Cys-101, Cys-104, and His-105. The interval 135–588 (AIAAGPSETT…DNAAKHALDK (454 aa)) is flavoprotein-like. FAD-binding residues include Ala-154, Asp-173, Asn-181, Ser-182, Gly-187, and Gly-188. Gly-187 is a fumarate binding site. Residue Gly-187 participates in succinate binding. Arg-218 is a heme c binding site. FAD contacts are provided by Val-295 and Asp-361. Positions 382, 394, and 395 each coordinate succinate. Residues Ser-394 and Glu-395 each coordinate fumarate. Arg-419 acts as the Proton donor in catalysis. Residue His-521 participates in fumarate binding. His-521 provides a ligand contact to succinate. Glu-551 lines the FAD pocket. 2 residues coordinate fumarate: Arg-561 and Gly-564. Succinate-binding residues include Arg-561 and Gly-564. FAD contacts are provided by Gly-564, Ala-566, and Ile-567.

Homodimer. FAD serves as cofactor. Heme c is required as a cofactor.

It is found in the periplasm. Its function is as follows. Flavocytochrome that catalyzes the reduction of fumarate to succinate in vitro. Is essentially unidirectional, catalyzing only fumarate reduction. In vitro, can use the artificial electron donor methyl viologen. May be involved in an alternative route for electron transport to Fe(3+). This chain is Probable fumarate reductase Ifc3, found in Shewanella frigidimarina (strain NCIMB 400).